We begin with the raw amino-acid sequence, 156 residues long: Transcriptional regulator MraZ (156 aa).

SpoVT-AbrB domains follow at residues 7–54 and 84–127; these read NIEV…PESV and VEVV…AKER.

The protein belongs to the MraZ family. As to quaternary structure, forms oligomers.

The protein resides in the cytoplasm. Its subcellular location is the nucleoid. The protein is Transcriptional regulator MraZ of Bacteroides thetaiotaomicron (strain ATCC 29148 / DSM 2079 / JCM 5827 / CCUG 10774 / NCTC 10582 / VPI-5482 / E50).